Reading from the N-terminus, the 1906-residue chain is Alpha-2-macroglobulin homolog (1906 aa).

The signal sequence occupies residues 1-21 (MIIRVCIRCFIVLTLVLGIGG). A lipid anchor (N-palmitoyl cysteine) is attached at Cys-22. The S-diacylglycerol cysteine moiety is linked to residue Cys-22.

The protein belongs to the protease inhibitor I39 (alpha-2-macroglobulin) family. Bacterial alpha-2-macroglobulin subfamily.

It localises to the cell membrane. The protein is Alpha-2-macroglobulin homolog of Nostoc sp. (strain PCC 7120 / SAG 25.82 / UTEX 2576).